Reading from the N-terminus, the 234-residue chain is Proteasome subunit alpha (234 aa).

It belongs to the peptidase T1A family. As to quaternary structure, the 20S proteasome core is composed of 14 alpha and 14 beta subunits that assemble into four stacked heptameric rings, resulting in a barrel-shaped structure. The two inner rings, each composed of seven catalytic beta subunits, are sandwiched by two outer rings, each composed of seven alpha subunits. The catalytic chamber with the active sites is on the inside of the barrel. Has a gated structure, the ends of the cylinder being occluded by the N-termini of the alpha-subunits. Is capped at one or both ends by the proteasome regulatory ATPase, PAN.

The protein resides in the cytoplasm. With respect to regulation, the formation of the proteasomal ATPase PAN-20S proteasome complex, via the docking of the C-termini of PAN into the intersubunit pockets in the alpha-rings, triggers opening of the gate for substrate entry. Interconversion between the open-gate and close-gate conformations leads to a dynamic regulation of the 20S proteasome proteolysis activity. In terms of biological role, component of the proteasome core, a large protease complex with broad specificity involved in protein degradation. This is Proteasome subunit alpha from Picrophilus torridus (strain ATCC 700027 / DSM 9790 / JCM 10055 / NBRC 100828 / KAW 2/3).